Here is a 706-residue protein sequence, read N- to C-terminus: Glutamine-dependent NAD(+) synthetase (706 aa).

In terms of domain architecture, CN hydrolase spans 5-275 (VTVATCALNQ…VEVLTATLDL (271 aa)). Glutamate 45 functions as the Proton acceptor; for glutaminase activity in the catalytic mechanism. Lysine 114 (for glutaminase activity) is an active-site residue. Cysteine 175 acts as the Nucleophile; for glutaminase activity in catalysis. The tract at residues 325–706 (YHSPAEEISL…RQRQELDGVD (382 aa)) is ligase. 355-362 (PLSGGVDS) provides a ligand contact to ATP. Serine 357 is a catalytic residue.

This sequence in the C-terminal section; belongs to the NAD synthetase family. In terms of assembly, homohexamer.

The catalysed reaction is deamido-NAD(+) + L-glutamine + ATP + H2O = L-glutamate + AMP + diphosphate + NAD(+) + H(+). Its pathway is cofactor biosynthesis; NAD(+) biosynthesis; NAD(+) from deamido-NAD(+) (L-Gln route): step 1/1. Catalyzes the ATP-dependent amidation of deamido-NAD to form NAD. Uses L-glutamine as a nitrogen source. This is Glutamine-dependent NAD(+) synthetase (NADSYN1) from Bos taurus (Bovine).